The chain runs to 504 residues: UDP-N-acetylmuramoylalanine--D-glutamate ligase (504 aa).

ATP is bound at residue 129 to 135; the sequence is GTNGKTT.

Belongs to the MurCDEF family.

It is found in the cytoplasm. It catalyses the reaction UDP-N-acetyl-alpha-D-muramoyl-L-alanine + D-glutamate + ATP = UDP-N-acetyl-alpha-D-muramoyl-L-alanyl-D-glutamate + ADP + phosphate + H(+). Its pathway is cell wall biogenesis; peptidoglycan biosynthesis. Functionally, cell wall formation. Catalyzes the addition of glutamate to the nucleotide precursor UDP-N-acetylmuramoyl-L-alanine (UMA). The sequence is that of UDP-N-acetylmuramoylalanine--D-glutamate ligase from Burkholderia thailandensis (strain ATCC 700388 / DSM 13276 / CCUG 48851 / CIP 106301 / E264).